The primary structure comprises 382 residues: Probable inactive dehydrogenase easA (382 aa).

Residues 25-27, Ala-60, Gln-102, and His-171 contribute to the FMN site; that span reads PMT. His-171 and Asn-174 together coordinate substrate. FMN-binding positions include Lys-223, Gly-299, 324–325, and Arg-325; that span reads GR. Tyr-352 is a binding site for substrate.

This sequence belongs to the NADH:flavin oxidoreductase/NADH oxidase family.

In terms of biological role, probable inactive dehydrogenase; part of the gene cluster that mediates the biosynthesis of fungal ergot alkaloid. DmaW catalyzes the first step of ergot alkaloid biosynthesis by condensing dimethylallyl diphosphate (DMAP) and tryptophan to form 4-dimethylallyl-L-tryptophan. The second step is catalyzed by the methyltransferase easF that methylates 4-dimethylallyl-L-tryptophan in the presence of S-adenosyl-L-methionine, resulting in the formation of 4-dimethylallyl-L-abrine. The catalase easC and the FAD-dependent oxidoreductase easE then transform 4-dimethylallyl-L-abrine to chanoclavine-I which is further oxidized by easD in the presence of NAD(+), resulting in the formation of chanoclavine-I aldehyde. Agroclavine dehydrogenase easG then mediates the conversion of chanoclavine-I aldehyde to agroclavine via a non-enzymatic adduct reaction: the substrate is an iminium intermediate that is formed spontaneously from chanoclavine-I aldehyde in the presence of glutathione. Further conversion of agroclavine to paspalic acid is a two-step process involving oxidation of agroclavine to elymoclavine and of elymoclavine to paspalic acid, the second step being performed by the elymoclavine oxidase cloA. However, cloA does not encode a functional enzyme indicating that C.fusiformis terminates its ergot alkaloid pathway at elymoclavine. The sequence is that of Probable inactive dehydrogenase easA from Claviceps fusiformis (Ergot fungus).